The chain runs to 357 residues: Peptide chain release factor 1 (357 aa).

Glutamine 236 bears the N5-methylglutamine mark.

This sequence belongs to the prokaryotic/mitochondrial release factor family. In terms of processing, methylated by PrmC. Methylation increases the termination efficiency of RF1.

The protein localises to the cytoplasm. Its function is as follows. Peptide chain release factor 1 directs the termination of translation in response to the peptide chain termination codons UAG and UAA. This Mycobacterium avium (strain 104) protein is Peptide chain release factor 1.